Reading from the N-terminus, the 115-residue chain is Small nuclear ribonucleoprotein Sm D2 (115 aa).

The Sm domain occupies 30-115 (LSVLQQAVKN…VVLVVRIPSA (86 aa)).

It belongs to the snRNP core protein family. Belongs to the 40S cdc5-associated complex (or cwf complex), a spliceosome sub-complex reminiscent of a late-stage spliceosome composed of the U2, U5 and U6 snRNAs and at least brr2, cdc5, cwf2/prp3, cwf3/syf1, cwf4/syf3, cwf5/ecm2, spp42/cwf6, cwf7/spf27, cwf8, cwf9, cwf10, cwf11, cwf12, prp45/cwf13, cwf14, cwf15, cwf16, cwf17, cwf18, cwf19, cwf20, cwf21, cwf22, cwf23, cwf24, cwf25, cwf26, cyp7/cwf27, cwf28, cwf29/ist3, lea1, msl1, prp5/cwf1, prp10, prp12/sap130, prp17, prp22, sap61, sap62, sap114, sap145, slu7, smb1, smd1, smd3, smf1, smg1 and syf2.

The protein localises to the nucleus. Its subcellular location is the cytoplasm. The protein resides in the cytosol. Plays a role in pre-mRNA splicing as a core component of the spliceosomal U1, U2, U4 and U5 small nuclear ribonucleoproteins (snRNPs), the building blocks of the spliceosome. This chain is Small nuclear ribonucleoprotein Sm D2 (smd2), found in Schizosaccharomyces pombe (strain 972 / ATCC 24843) (Fission yeast).